A 240-amino-acid chain; its full sequence is tRNA (guanine-N(1)-)-methyltransferase (240 aa).

S-adenosyl-L-methionine-binding positions include glycine 110 and 129 to 134; that span reads LGDFVL.

This sequence belongs to the RNA methyltransferase TrmD family. In terms of assembly, homodimer.

It localises to the cytoplasm. It carries out the reaction guanosine(37) in tRNA + S-adenosyl-L-methionine = N(1)-methylguanosine(37) in tRNA + S-adenosyl-L-homocysteine + H(+). Its function is as follows. Specifically methylates guanosine-37 in various tRNAs. The protein is tRNA (guanine-N(1)-)-methyltransferase of Clostridium botulinum (strain Langeland / NCTC 10281 / Type F).